Reading from the N-terminus, the 447-residue chain is Large ribosomal subunit protein bL27m (447 aa).

2 stretches are compositionally biased toward basic and acidic residues: residues 377–402 (QREAKKAREGGAAAEKSEKKEVKAEK) and 409–447 (KVEKPKAPEAAKKESKPKVEEKKAAAAEPKKDSKTEKKD). A disordered region spans residues 377–447 (QREAKKAREG…KKDSKTEKKD (71 aa)).

It belongs to the bacterial ribosomal protein bL27 family. Component of the mitochondrial large ribosomal subunit (mt-LSU). Mature N.crassa 74S mitochondrial ribosomes consist of a small (37S) and a large (54S) subunit. The 37S small subunit contains a 16S ribosomal RNA (16S mt-rRNA) and 32 different proteins. The 54S large subunit contains a 23S rRNA (23S mt-rRNA) and 42 different proteins.

The protein localises to the mitochondrion. Its function is as follows. Component of the mitochondrial ribosome (mitoribosome), a dedicated translation machinery responsible for the synthesis of mitochondrial genome-encoded proteins, including at least some of the essential transmembrane subunits of the mitochondrial respiratory chain. The mitoribosomes are attached to the mitochondrial inner membrane and translation products are cotranslationally integrated into the membrane. The protein is Large ribosomal subunit protein bL27m (mrp7) of Neurospora crassa (strain ATCC 24698 / 74-OR23-1A / CBS 708.71 / DSM 1257 / FGSC 987).